We begin with the raw amino-acid sequence, 314 residues long: tRNA uridine(34) hydroxylase (314 aa).

In terms of domain architecture, Rhodanese spans 140–234; it reads SRDDVILVDT…YLEETPAEES (95 aa). The Cysteine persulfide intermediate role is filled by cysteine 194.

This sequence belongs to the TrhO family.

It catalyses the reaction uridine(34) in tRNA + AH2 + O2 = 5-hydroxyuridine(34) in tRNA + A + H2O. Functionally, catalyzes oxygen-dependent 5-hydroxyuridine (ho5U) modification at position 34 in tRNAs. The chain is tRNA uridine(34) hydroxylase from Acinetobacter baylyi (strain ATCC 33305 / BD413 / ADP1).